The chain runs to 137 residues: MIVRNLEEARQTDRLVTAENGNWDSTRLSLAEDGGNCSFHITRIFEGTETHIHYKHHFEAVYCIEGEGEVETLADGKIWPIKPGDIYILDQHDEHLLRASKTMHLACVFTPGLTGNEVHREDGSYAPADEADDQKPL.

The segment at 118–137 (VHREDGSYAPADEADDQKPL) is disordered.

Belongs to the ectoine synthase family.

The enzyme catalyses (2S)-4-acetamido-2-aminobutanoate = L-ectoine + H2O. The protein operates within amine and polyamine biosynthesis; ectoine biosynthesis; L-ectoine from L-aspartate 4-semialdehyde: step 3/3. Its activity is regulated as follows. Seems to require potassium ions for its activity and stability. Slightly inhibited by N-ethylmaleimide. Functionally, catalyzes the circularization of gamma-N-acetyl-alpha,gamma-diaminobutyric acid (ADABA) to ectoine (1,4,5,6-tetrahydro-2-methyl-4-pyrimidine carboxylic acid), which is an excellent osmoprotectant. Does not act on N-acetylated amino acids like N-alpha-acetyl-L-asparagine,N-alpha-acetyl-L-ornithine, N-alpha-acetyl-L-lysine and N-epsilon-acetyl-L-lysine. In Halomonas elongata (strain ATCC 33173 / DSM 2581 / NBRC 15536 / NCIMB 2198 / 1H9), this protein is L-ectoine synthase (ectC).